The chain runs to 539 residues: Phosphoenolpyruvate carboxykinase (ATP) (539 aa).

Residues Arg64, Tyr206, and Lys212 each contribute to the substrate site. ATP contacts are provided by residues Lys212, His231, and Gly247–Thr255. Residues Lys212 and His231 each coordinate Mn(2+). Position 268 (Asp268) interacts with Mn(2+). ATP is bound by residues Glu296, Arg332, Arg448 to Ile449, and Thr454. Residue Arg332 participates in substrate binding.

It belongs to the phosphoenolpyruvate carboxykinase (ATP) family. In terms of assembly, monomer. Mn(2+) serves as cofactor.

It is found in the cytoplasm. It carries out the reaction oxaloacetate + ATP = phosphoenolpyruvate + ADP + CO2. The protein operates within carbohydrate biosynthesis; gluconeogenesis. Involved in the gluconeogenesis. Catalyzes the conversion of oxaloacetate (OAA) to phosphoenolpyruvate (PEP) through direct phosphoryl transfer between the nucleoside triphosphate and OAA. This chain is Phosphoenolpyruvate carboxykinase (ATP), found in Salmonella choleraesuis (strain SC-B67).